We begin with the raw amino-acid sequence, 462 residues long: MILVSLLPLLFMTGIASESTISSGLASLKAKIDIKKPTGKQLFDKVKSMEQALENKFSDDDERAKVMGAIGSLGTAIGKFQSGDPASIASGCLDILVGISSVLKDFAKFSPVFSILSLVVGLFSGTKAEESVSSVVTKAIQEQSDQELQEALYGVKREFAVSKAFLDGVRNEESDLRPTEVSALAANIPVYQGVRFIAMVVQRIKYIKPKTESEIKRMLTMLELFTDLCSIRDLILLDLHQLIATPGHSPNIASGIKEVTSLGREEYQRVFEDLLKTDDEETFLFLSYLYPKEKNEQSRKIFKFFDLIEVKYDDRFKLDLSGGQALSTLQWPNYYLCPHNDYLANNCHDLRVGLKLEKLSDGFYTIKTYGRDPRTCYWTDDYVKISSTSNGELEKFSFVPVQVKGQKAYLLSTKKWPHNFAYSQKTANGLLSILKDVPSKLGYGNQGFFTISTYSNPKNRHA.

Residues 1-17 (MILVSLLPLLFMTGIAS) form the signal peptide.

It belongs to the jellyfish toxin family. Type I subfamily. As to quaternary structure, oligomer. Post-translationally, contains disulfide bonds. As to expression, nematocytes.

Its subcellular location is the secreted. It is found in the nematocyst. The protein resides in the target cell membrane. Functionally, may cause profound effects on the cardiovascular system of anesthetized rats (at 25 ug/kg), since the fraction containing this toxin and CfTX-1 produces an initial increase in mean arterial pressure, followed by cardiovascular collapse in all animals within 1 minute of injection. To note, the same fraction does not induce significant change in heart rate. Has weak hemolytic activity. Is lethal to crayfish. Causes cutaneous inflammation in humans. May act as a pore-forming toxin, disrupting normal transmembrane ion concentration gradients in susceptible cells. This is Toxin CfTX-2 from Chironex fleckeri (Australian box jellyfish).